Reading from the N-terminus, the 224-residue chain is BTB/POZ domain-containing protein At5g48510 (224 aa).

The BTB domain occupies 24–98 (VDVMLKAKNS…ICSDGSMLSA (75 aa)).

In terms of assembly, interacts with CUL3A.

Its pathway is protein modification; protein ubiquitination. Functionally, may act as a substrate-specific adapter of an E3 ubiquitin-protein ligase complex (CUL3-RBX1-BTB) which mediates the ubiquitination and subsequent proteasomal degradation of target proteins. In Arabidopsis thaliana (Mouse-ear cress), this protein is BTB/POZ domain-containing protein At5g48510.